The chain runs to 323 residues: MIDFGNFYSLIAKNHLSHWLETLPAQIANWQREQQHGLFKQWSNTVEFLPEIKPYRLDLLHSVTAESEEPLSTGQIKRIETLMRNLMPWRKGPFSLYGVNIDTEWCSDWKWDRVLPHLSDLTGRTILDVGCGSGYHMWRMIGAGAHLAVGIDPTQLFLCQFEAVRKLLGNDQRAHLLPLGIEQLPALKAFDTVFSMGVLYHRRSPLEHLWQLKDQLVNEGELVLETLVIDGDENTVLVPGDRYAQMRNVYFIPSALALKNWLKKCGFVDIRIVDVCVTTTEEQRRTEWMVTESLSDFLDPHDPSKTVEGYPAPKRAVLIARKP.

Residues Lys91, Trp105, Lys110, Gly130, 152–154 (DPT), 181–182 (IE), Met196, Tyr200, and Arg315 contribute to the carboxy-S-adenosyl-L-methionine site.

This sequence belongs to the class I-like SAM-binding methyltransferase superfamily. CmoB family. As to quaternary structure, homotetramer.

The enzyme catalyses carboxy-S-adenosyl-L-methionine + 5-hydroxyuridine(34) in tRNA = 5-carboxymethoxyuridine(34) in tRNA + S-adenosyl-L-homocysteine + H(+). In terms of biological role, catalyzes carboxymethyl transfer from carboxy-S-adenosyl-L-methionine (Cx-SAM) to 5-hydroxyuridine (ho5U) to form 5-carboxymethoxyuridine (cmo5U) at position 34 in tRNAs. This Shigella flexneri protein is tRNA U34 carboxymethyltransferase.